A 20-amino-acid chain; its full sequence is Glutathione S-transferase 2 (20 aa).

The GST N-terminal domain occupies 1–20 (GYKVTYFAIRGLAEPIXLLL). Tyrosine 6 contacts glutathione.

It belongs to the GST superfamily. Sigma family.

The enzyme catalyses RX + glutathione = an S-substituted glutathione + a halide anion + H(+). Conjugation of reduced glutathione to a wide number of exogenous and endogenous hydrophobic electrophiles. The protein is Glutathione S-transferase 2 (GST2) of Ascaris suum (Pig roundworm).